We begin with the raw amino-acid sequence, 183 residues long: Protein jagunal homolog 1 (183 aa).

Topologically, residues 1 to 39 are cytoplasmic; sequence MASRAGPRAAGTDGSDFQHRERVAMHYQMSVTLKYEIKK. Ser-3 carries the post-translational modification Phosphoserine. A helical membrane pass occupies residues 40 to 60; the sequence is LIYVHLVIWLLLVAKMSVGHL. At 61–71 the chain is on the lumenal side; sequence RLLSHDQVAMP. The helical transmembrane segment at 72–92 threads the bilayer; that stretch reads YQWEYPYLLSVVPSLLGLLSF. Topologically, residues 93 to 96 are cytoplasmic; sequence PRNN. Residues 97-117 traverse the membrane as a helical segment; sequence ISYLVLSMISMGLFSIAPLIY. Residues 118-137 lie on the Lumenal side of the membrane; it reads GSMEMFPAAQQLYRHGKAYR. A helical transmembrane segment spans residues 138-158; it reads FLFGFSAVSVMYLVLVLAVQV. The Cytoplasmic segment spans residues 159 to 183; that stretch reads HAWQLYYSKKLLDSWFTSTQEKKRK.

Belongs to the jagunal family. Interacts with COPA, COPB2 and COPG2.

It is found in the endoplasmic reticulum membrane. Its function is as follows. Endoplasmic reticulum transmembrane protein involved in vesicle-mediated transport, which is required for neutrophil function. Required for vesicle-mediated transport; it is however unclear whether it is involved in early secretory pathway or intracellular protein transport. Acts as a regulator of neutrophil function, probably via its role in vesicle-mediated transport: required for defense against fungal pathogens and for granulocyte colony-stimulating factor (GM-CSF) signaling pathway; possibly by regulating glycosylation and/or targeting of proteins contributing to the viability and migration of neutrophils. The protein is Protein jagunal homolog 1 (JAGN1) of Bos taurus (Bovine).